The sequence spans 248 residues: 3-deoxy-manno-octulosonate cytidylyltransferase (248 aa).

Belongs to the KdsB family.

The protein resides in the cytoplasm. It catalyses the reaction 3-deoxy-alpha-D-manno-oct-2-ulosonate + CTP = CMP-3-deoxy-beta-D-manno-octulosonate + diphosphate. The protein operates within nucleotide-sugar biosynthesis; CMP-3-deoxy-D-manno-octulosonate biosynthesis; CMP-3-deoxy-D-manno-octulosonate from 3-deoxy-D-manno-octulosonate and CTP: step 1/1. Its pathway is bacterial outer membrane biogenesis; lipopolysaccharide biosynthesis. Activates KDO (a required 8-carbon sugar) for incorporation into bacterial lipopolysaccharide in Gram-negative bacteria. In Shigella boydii serotype 18 (strain CDC 3083-94 / BS512), this protein is 3-deoxy-manno-octulosonate cytidylyltransferase.